We begin with the raw amino-acid sequence, 35 residues long: Coatomer subunit alpha (35 aa).

As to quaternary structure, oligomeric complex that consists of at least the alpha, beta, beta', gamma, delta, epsilon and zeta subunits. Interacts with SCYL1. Interacts with JAGN1. Interacts with TMEM41B. Interacts with SVEP1. Probably interacts with PEX11A. Gastric, duodenal and jejunal mucosa. Circulates in the blood. Seems to be confined to specific endocrine cells.

Functionally, xenin stimulates exocrine pancreatic secretion. It inhibits pentagastrin-stimulated secretion of acid, to induce exocrine pancreatic secretion and to affect small and large intestinal motility. In the gut, xenin interacts with the neurotensin receptor. This chain is Coatomer subunit alpha (COPA), found in Canis lupus familiaris (Dog).